A 621-amino-acid chain; its full sequence is uncharacterized protein (621 aa).

Composition is skewed to low complexity over residues 1–10 (MIEDNINNNE), 63–79 (TEPL…TTPS), 137–182 (NNNN…NNFN), and 309–347 (NQSI…NNNN). 7 disordered regions span residues 1–29 (MIED…DKNN), 63–100 (TEPL…SNKT), 135–194 (DDNN…KDND), 307–374 (KTNQ…EDDT), 430–471 (YNNN…IAKR), 492–539 (KQSQ…IKII), and 594–614 (PTQI…SPSK). Residues 348 to 357 (STLTSSNSLS) show a composition bias toward polar residues. Composition is skewed to low complexity over residues 431-459 (NNNN…NNNN), 496-539 (NNNN…IKII), and 597-613 (INSN…SSPS).

This is an uncharacterized protein from Dictyostelium discoideum (Social amoeba).